Reading from the N-terminus, the 78-residue chain is MSAHCQVTGRKPSFGKSVSHSHRRTSRRWNPNVQRRKFYVPSEGRTITLTVSTKGLKVIDRDGIEAVVAQIRARGEKI.

The tract at residues 1–29 (MSAHCQVTGRKPSFGKSVSHSHRRTSRRW) is disordered.

This sequence belongs to the bacterial ribosomal protein bL28 family.

The polypeptide is Large ribosomal subunit protein bL28 (Corynebacterium glutamicum (strain ATCC 13032 / DSM 20300 / JCM 1318 / BCRC 11384 / CCUG 27702 / LMG 3730 / NBRC 12168 / NCIMB 10025 / NRRL B-2784 / 534)).